Consider the following 301-residue polypeptide: MAACVDKWPAAYPCRLPDKFYCALPDCTTTDRPVAPAPAASGSSGDYVWDALRAEAQDDADDEPLLRKFYHDLVLSRPSLESALASLLAAKLCIPGALPQDQLRDLLAGALAAHPEAGRAARADLAAARDRDPACAKMVHCFLYYRGFLALQAHRAAHALWSDNRRAPALLLQSRASEVFGVDIHPGARIGGGILLDHATGVVIGETAVVGYGVSILHAVTLGGTGKESGDRHPKVGDGVLIGAGASVLGNVHIGDGAEIGAGAIVLRDVADGTTAKPIIGKKAEPQRELPGVTMEQRWSD.

The interval 280 to 301 is disordered; it reads IGKKAEPQRELPGVTMEQRWSD.

This sequence belongs to the transferase hexapeptide repeat family. Homomultimer.

It catalyses the reaction L-serine + acetyl-CoA = O-acetyl-L-serine + CoA. The protein operates within amino-acid biosynthesis; L-cysteine biosynthesis; L-cysteine from L-serine: step 1/2. The protein is Probable serine acetyltransferase 3 (SAT3) of Oryza sativa subsp. japonica (Rice).